The following is a 217-amino-acid chain: Pyridoxine/pyridoxamine 5'-phosphate oxidase (217 aa).

Substrate-binding positions include 13–16 (RREY) and Lys-71. Residues 66-71 (RIVLLK), 81-82 (YT), Arg-87, Lys-88, and Gln-110 each bind FMN. Positions 128, 132, and 136 each coordinate substrate. FMN-binding positions include 145-146 (QS) and Trp-190. Substrate is bound at residue 196-198 (RLH). Arg-200 serves as a coordination point for FMN.

The protein belongs to the pyridoxamine 5'-phosphate oxidase family. As to quaternary structure, homodimer. FMN serves as cofactor.

It catalyses the reaction pyridoxamine 5'-phosphate + O2 + H2O = pyridoxal 5'-phosphate + H2O2 + NH4(+). It carries out the reaction pyridoxine 5'-phosphate + O2 = pyridoxal 5'-phosphate + H2O2. It participates in cofactor metabolism; pyridoxal 5'-phosphate salvage; pyridoxal 5'-phosphate from pyridoxamine 5'-phosphate: step 1/1. It functions in the pathway cofactor metabolism; pyridoxal 5'-phosphate salvage; pyridoxal 5'-phosphate from pyridoxine 5'-phosphate: step 1/1. Its function is as follows. Catalyzes the oxidation of either pyridoxine 5'-phosphate (PNP) or pyridoxamine 5'-phosphate (PMP) into pyridoxal 5'-phosphate (PLP). This Yersinia pestis bv. Antiqua (strain Antiqua) protein is Pyridoxine/pyridoxamine 5'-phosphate oxidase.